Here is a 464-residue protein sequence, read N- to C-terminus: Argininosuccinate lyase (464 aa).

The protein belongs to the lyase 1 family. Argininosuccinate lyase subfamily.

Its subcellular location is the cytoplasm. It carries out the reaction 2-(N(omega)-L-arginino)succinate = fumarate + L-arginine. The protein operates within amino-acid biosynthesis; L-arginine biosynthesis; L-arginine from L-ornithine and carbamoyl phosphate: step 3/3. The protein is Argininosuccinate lyase of Streptococcus suis (strain 98HAH33).